Reading from the N-terminus, the 334-residue chain is Biotin synthase (334 aa).

The Radical SAM core domain maps to 41 to 260 (TRLETASLLS…IAVARIMMPR (220 aa)). Positions 56, 60, and 63 each coordinate [4Fe-4S] cluster. The [2Fe-2S] cluster site is built by Cys100, Cys131, Cys191, and Arg264.

The protein belongs to the radical SAM superfamily. Biotin synthase family. As to quaternary structure, homodimer. It depends on [4Fe-4S] cluster as a cofactor. The cofactor is [2Fe-2S] cluster.

It catalyses the reaction (4R,5S)-dethiobiotin + (sulfur carrier)-SH + 2 reduced [2Fe-2S]-[ferredoxin] + 2 S-adenosyl-L-methionine = (sulfur carrier)-H + biotin + 2 5'-deoxyadenosine + 2 L-methionine + 2 oxidized [2Fe-2S]-[ferredoxin]. Its pathway is cofactor biosynthesis; biotin biosynthesis; biotin from 7,8-diaminononanoate: step 2/2. In terms of biological role, catalyzes the conversion of dethiobiotin (DTB) to biotin by the insertion of a sulfur atom into dethiobiotin via a radical-based mechanism. The chain is Biotin synthase from Bradyrhizobium sp. (strain ORS 278).